The chain runs to 218 residues: Serine/threonine-protein phosphatase 2 (218 aa).

Mn(2+) is bound by residues Asp22, His24, Asp51, and Asn77. His78 serves as the catalytic Proton donor. Residue His187 participates in Mn(2+) binding.

It belongs to the PPP phosphatase family. Mn(2+) serves as cofactor.

The catalysed reaction is O-phospho-L-seryl-[protein] + H2O = L-seryl-[protein] + phosphate. It carries out the reaction O-phospho-L-threonyl-[protein] + H2O = L-threonyl-[protein] + phosphate. Has been shown, in vitro, to act on Ser, Thr and Tyr-phosphorylated substrates. In Escherichia coli (strain K12), this protein is Serine/threonine-protein phosphatase 2 (pphB).